The primary structure comprises 345 residues: Selenide, water dikinase (345 aa).

The active site involves cysteine 16. ATP contacts are provided by residues lysine 19 and 45 to 47; that span reads TSE. Aspartate 48 lines the Mg(2+) pocket. ATP contacts are provided by residues aspartate 65, aspartate 88, and 136-138; that span reads GHT. Mg(2+) is bound at residue aspartate 88. Aspartate 224 contacts Mg(2+).

This sequence belongs to the selenophosphate synthase 1 family. Class I subfamily. Homodimer. The cofactor is Mg(2+).

The enzyme catalyses hydrogenselenide + ATP + H2O = selenophosphate + AMP + phosphate + 2 H(+). In terms of biological role, synthesizes selenophosphate from selenide and ATP. This Aliarcobacter butzleri (strain RM4018) (Arcobacter butzleri) protein is Selenide, water dikinase.